Consider the following 175-residue polypeptide: Disulfide bond formation protein B (175 aa).

Over 1-13 (MSKLVTFSQQRSA) the chain is Cytoplasmic. Residues 14–30 (WLILMFSALGLEASALY) traverse the membrane as a helical segment. Over 31–48 (FQYVMLLDPCVMCIYIRV) the chain is Periplasmic. The cysteines at positions 40 and 43 are disulfide-linked. Residues 49–64 (AVLGLILAGLVGSIAP) traverse the membrane as a helical segment. At 65–71 (RFWIVRF) the chain is on the cytoplasmic side. Residues 72 to 89 (LGMSLWGVSSAWGAKLSF) form a helical membrane-spanning segment. The Periplasmic portion of the chain corresponds to 90 to 144 (ELYQMQANPSPFSTCSFYPEFPTWMPLDAWMPSIFMPTGMCSDIPWTMMSLSMTQ). Residues Cys-104 and Cys-130 are joined by a disulfide bond. The helical transmembrane segment at 145–163 (WTLIAFVGYSIAFLLFIYP) threads the bilayer. The Cytoplasmic segment spans residues 164-175 (GLLYKKPTNPYS).

It belongs to the DsbB family.

It is found in the cell inner membrane. Its function is as follows. Required for disulfide bond formation in some periplasmic proteins. Acts by oxidizing the DsbA protein. The chain is Disulfide bond formation protein B from Shewanella denitrificans (strain OS217 / ATCC BAA-1090 / DSM 15013).